We begin with the raw amino-acid sequence, 518 residues long: Cytochrome P450 monooxygenase ARMGADRAFT_1018417 (518 aa).

A helical transmembrane segment spans residues 3–23 (LFSAYALAFSLLMIPLILYIL). Cysteine 433 is a binding site for heme. N-linked (GlcNAc...) asparagine glycosylation occurs at asparagine 455.

It belongs to the cytochrome P450 family. Heme serves as cofactor.

It is found in the membrane. It participates in secondary metabolite biosynthesis. Functionally, cytochrome P450 monooxygenase, part of the gene cluster that mediates the biosynthesis of melleolides, a range of antifungal and phytotoxic polyketide derivatives composed of an orsellinic acid (OA) moiety esterified to various sesquiterpene alcohols. The first step in melleolides biosynthesis is performed by the delta(6)-protoilludene synthase PRO1 which catalyzes the cyclization of farnesyl diphosphate to protoilludene. The orsellinic acid synthase armB produces OA by condensing acetyl-CoA with 3 malonyl-CoA units in a three-round chain elongation reaction folowed by a C2-C7 ring closure. ArmB further catalyzes the trans-esterification of OA to the various sesquiterpene alcohols resulting from the hydroxylation of protoilludene. The melleolides cluster also includes 5 cytochrome P450 monooxygenases, 4 NAD(+)-dependent oxidoreductases, one flavin-dependent oxidoreductase, and one O-methyltransferase. The cytochrome P450 monooxygenases may be involved in protoilludene hydroxylation to elaborate melleolides with multiple alcohol groups, such as melleolide D, which carries alcohol functionalities at C-4, C-5, C-10, and C-13. The role of the NAD(+)-dependent enzymes remains unknown. Numerous melleolides, including arnamial, show 5'-O-methylation of the aromatic moiety which may be catalyzed by the methyltransferase encoded in the cluster. The flavin-dependent oxidoreductase might represent the dehydrogenase yielding the aldehyde in position 1 of arnamial and other melleolides. Finally, several halogenase localized outside of the cluster, are able to catalyze the transfer of a single chlorine atom to the melleolide backbone, resulting in a 6'-chloromelleolide product. The sequence is that of Cytochrome P450 monooxygenase ARMGADRAFT_1018417 from Armillaria gallica (Bulbous honey fungus).